The sequence spans 443 residues: Signal recognition particle 54 kDa protein (443 aa).

Residues 107–114 (GIQGSGKT), 189–193 (DTAGR), and 247–250 (TKLD) each bind GTP.

This sequence belongs to the GTP-binding SRP family. SRP54 subfamily. As to quaternary structure, part of the signal recognition particle protein translocation system, which is composed of SRP and FtsY. Archaeal SRP consists of a 7S RNA molecule of 300 nucleotides and two protein subunits: SRP54 and SRP19.

The protein resides in the cytoplasm. It carries out the reaction GTP + H2O = GDP + phosphate + H(+). Its function is as follows. Involved in targeting and insertion of nascent membrane proteins into the cytoplasmic membrane. Binds to the hydrophobic signal sequence of the ribosome-nascent chain (RNC) as it emerges from the ribosomes. The SRP-RNC complex is then targeted to the cytoplasmic membrane where it interacts with the SRP receptor FtsY. This Pyrococcus furiosus (strain ATCC 43587 / DSM 3638 / JCM 8422 / Vc1) protein is Signal recognition particle 54 kDa protein.